The primary structure comprises 395 residues: Ketol-acid reductoisomerase, mitochondrial (395 aa).

Residues 1–47 constitute a mitochondrion transit peptide; sequence MLRTQAARLICNSRVITAKRTFALATRAAAYSRPAARFVKPMITTRG. The 190-residue stretch at 57 to 246 folds into the KARI N-terminal Rossmann domain; the sequence is VETVYERADW…AIGSGYVYQT (190 aa). Residues 84–93, 108–113, and 146–150 contribute to the NADP(+) site; these read GYGSQGYGQG, RKDGAS, and SDAAQ. The active site involves H171. The region spanning 247–394 is the KARI C-terminal knotted domain; that stretch reads TFEREVNSDL…KEVRKLRPEN (148 aa). Residues D255, E259, E291, and E295 each contribute to the Mg(2+) site. S317 serves as a coordination point for substrate. At S355 the chain carries Phosphoserine. The hydrophilic stretch occupies residues 363-395; the sequence is DYREKLEKELDTIRNMEIWKVGKEVRKLRPENQ.

Belongs to the ketol-acid reductoisomerase family. Requires Mg(2+) as cofactor.

The protein resides in the mitochondrion. The catalysed reaction is (2R)-2,3-dihydroxy-3-methylbutanoate + NADP(+) = (2S)-2-acetolactate + NADPH + H(+). It catalyses the reaction (2R,3R)-2,3-dihydroxy-3-methylpentanoate + NADP(+) = (S)-2-ethyl-2-hydroxy-3-oxobutanoate + NADPH + H(+). The protein operates within amino-acid biosynthesis; L-isoleucine biosynthesis; L-isoleucine from 2-oxobutanoate: step 2/4. It functions in the pathway amino-acid biosynthesis; L-valine biosynthesis; L-valine from pyruvate: step 2/4. Its function is as follows. Involved in the biosynthesis of branched-chain amino acids (BCAA). Catalyzes the second common step in the parallel biosynthesis of isoleucine and valine. Converts alpha-aceto-alpha-hydroxybutyrate (AHB) to alpha,beta-dihydroxy-beta-methylvalerate (DHMV) and alpha-acetolactate (AL) to alpha,beta-dihydroxy-isovalerate (DHV) in isoleucine and valine biosynthesis, respectively. The polypeptide is Ketol-acid reductoisomerase, mitochondrial (Saccharomyces cerevisiae (strain ATCC 204508 / S288c) (Baker's yeast)).